A 604-amino-acid polypeptide reads, in one-letter code: Protein TAX4 (604 aa).

Disordered stretches follow at residues 38-77 (HPNG…PRSI), 133-249 (FSNR…RQQE), 267-300 (GTLP…QENL), 338-380 (DETF…KGLK), and 394-428 (PFPH…NEDK). Over residues 176–185 (YDNNVRSRSI) the composition is skewed to polar residues. Low complexity-rich tracts occupy residues 186–203 (SPQV…SISS) and 224–240 (SMSS…KASL). 3 stretches are compositionally biased toward basic residues: residues 276 to 290 (SQRK…HKLL), 366 to 379 (KKKK…KKGL), and 396 to 421 (PHHH…HTSS). The region spanning 469 to 559 (ANEDDESHLQ…RVWNSVDGYV (91 aa)) is the EH domain.

It belongs to the IRS4 family. Interacts with INP51.

In terms of biological role, with IRS4, acts as a positive regulator of INP51 activity and phosphatidylinositol 4,5-bisphosphate turnover. Negatively regulates signaling through the cell integrity pathway, including the MAP kinase SLT2. This Saccharomyces cerevisiae (strain YJM789) (Baker's yeast) protein is Protein TAX4 (TAX4).